The sequence spans 582 residues: uncharacterized protein (582 aa).

The segment covering 1-23 (MAHEGSRQVRDRGVTRSKAEKVR) has biased composition (basic and acidic residues). 3 disordered regions span residues 1–29 (MAHE…TVPV), 110–133 (AVAE…SWAQ), and 147–221 (LENF…SSAG). Ser-242 is modified (phosphoserine). 2 disordered regions span residues 310-331 (RPSA…SAHH) and 551-582 (LSSG…PKPR). Polar residues predominate over residues 311–320 (PSASCQQQRA).

This is an uncharacterized protein from Homo sapiens (Human).